Here is a 538-residue protein sequence, read N- to C-terminus: Frizzled-4 (538 aa).

Residues 1–37 (MAWQGTGPSVRGMPGGVRLRLGLLLLQLLLLQRPALG) form the signal peptide. The Extracellular segment spans residues 38-213 (FGDEEERRCD…KCGYDAGLYS (176 aa)). One can recognise an FZ domain in the interval 41–162 (EEERRCDPIR…NDHNHMCMEG (122 aa)). Cystine bridges form between Cys-46-Cys-107, Cys-54-Cys-100, Cys-91-Cys-129, Cys-118-Cys-159, Cys-122-Cys-146, Cys-182-Cys-201, Cys-205-Cys-283, and Cys-303-Cys-378. N-linked (GlcNAc...) asparagine glycosylation is present at Asn-60. N-linked (GlcNAc...) asparagine glycosylation occurs at Asn-145. A helical transmembrane segment spans residues 214-244 (RSAKEFTDIWMAVWASLCFISTTFTVLTFLI). At 245–250 (DSSRFS) the chain is on the cytoplasmic side. Residues 251–276 (YPERPIIFLSMCYNIYSIAYIVRLTV) traverse the membrane as a helical segment. Topologically, residues 277 to 300 (GRERISCDFEEAAEPVLIQEGLKN) are extracellular. A helical transmembrane segment spans residues 301-334 (TGCAIIFLLMYFFGMASSIWWVILTLTWFLAAGL). Residues 335 to 337 (KWG) lie on the Cytoplasmic side of the membrane. The helical transmembrane segment at 338-366 (HEAIEMHSSYFHIAAWAIPAVKTIVILIM) threads the bilayer. Topologically, residues 367–384 (RLVDADELTGLCYVGNQS) are extracellular. N-linked (GlcNAc...) asparagine glycosylation occurs at Asn-382. A helical membrane pass occupies residues 385–419 (LDALTGFVVAPLFTYLVIGTLFIAAGLVALFKIRS). At 420–432 (NLQKDGTKTDKLE) the chain is on the cytoplasmic side. The helical transmembrane segment at 433-461 (RLMVKIGVFSVLYTVPATCVIACYFYEIS) threads the bilayer. Over 462-474 (NWALFRYSADDSN) the chain is Extracellular. Residues 475 to 496 (MAVEMLKIFMSLLVGITSGMWI) form a helical membrane-spanning segment. The Cytoplasmic segment spans residues 497–538 (WSAKTLHTWQKCSNRLVNSGKVKREKRGNGWVKPGKGNETVV). Positions 500 to 505 (KTLHTW) match the Lys-Thr-X-X-X-Trp motif, mediates interaction with the PDZ domain of Dvl family members motif. A PDZ-binding motif is present at residues 536 to 538 (TVV).

It belongs to the G-protein coupled receptor Fz/Smo family. As to quaternary structure, interacts with MAGI3 and NDP. Component of a complex, at least composed of TSPAN12, FZD4 and norrin (NDP). Interacts (via FZ domain) with TSKU; TSKU competes with WNT2B for binding to FZD4, inhibiting Wnt signaling and repressing peripheral eye development. Interacts with glypican GPC3. In terms of processing, ubiquitinated by ZNRF3, leading to its degradation by the proteasome.

The protein localises to the cell membrane. Functionally, receptor for Wnt proteins. Most of frizzled receptors are coupled to the beta-catenin (CTNNB1) canonical signaling pathway, which leads to the activation of disheveled proteins, inhibition of GSK-3 kinase, nuclear accumulation of beta-catenin (CTNNB1) and activation of Wnt target genes. Plays a critical role in retinal vascularization by acting as a receptor for Wnt proteins and norrin (NDP). In retina, it can be both activated by Wnt protein-binding, but also by a Wnt-independent signaling via binding of norrin (NDP), promoting in both cases beta-catenin (CTNNB1) accumulation and stimulation of LEF/TCF-mediated transcriptional programs. A second signaling pathway involving PKC and calcium fluxes has been seen for some family members, but it is not yet clear if it represents a distinct pathway or if it can be integrated in the canonical pathway, as PKC seems to be required for Wnt-mediated inactivation of GSK-3 kinase. Both pathways seem to involve interactions with G-proteins. May be involved in transduction and intercellular transmission of polarity information during tissue morphogenesis and/or in differentiated tissues. This chain is Frizzled-4 (Fzd4), found in Rattus norvegicus (Rat).